We begin with the raw amino-acid sequence, 99 residues long: Large ribosomal subunit protein uL23 (99 aa).

Belongs to the universal ribosomal protein uL23 family. Part of the 50S ribosomal subunit. Contacts protein L29, and trigger factor when it is bound to the ribosome.

In terms of biological role, one of the early assembly proteins it binds 23S rRNA. One of the proteins that surrounds the polypeptide exit tunnel on the outside of the ribosome. Forms the main docking site for trigger factor binding to the ribosome. This chain is Large ribosomal subunit protein uL23, found in Lachnoclostridium phytofermentans (strain ATCC 700394 / DSM 18823 / ISDg) (Clostridium phytofermentans).